Here is a 195-residue protein sequence, read N- to C-terminus: Dephospho-CoA kinase (195 aa).

One can recognise a DPCK domain in the interval 4–195 (IIGLTGGIAS…EQILDALQRL (192 aa)). ATP is bound at residue 12–17 (ASGKST).

It belongs to the CoaE family.

Its subcellular location is the cytoplasm. The catalysed reaction is 3'-dephospho-CoA + ATP = ADP + CoA + H(+). Its pathway is cofactor biosynthesis; coenzyme A biosynthesis; CoA from (R)-pantothenate: step 5/5. Functionally, catalyzes the phosphorylation of the 3'-hydroxyl group of dephosphocoenzyme A to form coenzyme A. The polypeptide is Dephospho-CoA kinase (Streptococcus agalactiae serotype Ia (strain ATCC 27591 / A909 / CDC SS700)).